The sequence spans 355 residues: Probable GTP 3',8-cyclase (355 aa).

The Radical SAM core domain occupies 5 to 233; sequence AYGRPLKDLR…GRLHNRRVYR (229 aa). Arg14 is a binding site for GTP. [4Fe-4S] cluster-binding residues include Cys21, Cys25, and Cys28. A GTP-binding site is contributed by Lys69. Gly73 contacts S-adenosyl-L-methionine. Thr97 provides a ligand contact to GTP. S-adenosyl-L-methionine is bound at residue Ser121. Lys157 contacts GTP. The [4Fe-4S] cluster site is built by Cys252 and Cys255. GTP is bound at residue 257–259; that stretch reads RVR. Cys269 lines the [4Fe-4S] cluster pocket.

It belongs to the radical SAM superfamily. MoaA family. The cofactor is [4Fe-4S] cluster.

It catalyses the reaction GTP + AH2 + S-adenosyl-L-methionine = (8S)-3',8-cyclo-7,8-dihydroguanosine 5'-triphosphate + 5'-deoxyadenosine + L-methionine + A + H(+). Its pathway is cofactor biosynthesis; molybdopterin biosynthesis. Its function is as follows. Catalyzes the cyclization of GTP to (8S)-3',8-cyclo-7,8-dihydroguanosine 5'-triphosphate. This is Probable GTP 3',8-cyclase from Aeropyrum pernix (strain ATCC 700893 / DSM 11879 / JCM 9820 / NBRC 100138 / K1).